A 109-amino-acid chain; its full sequence is Large ribosomal subunit protein uL22 (109 aa).

Belongs to the universal ribosomal protein uL22 family. As to quaternary structure, part of the 50S ribosomal subunit.

In terms of biological role, this protein binds specifically to 23S rRNA; its binding is stimulated by other ribosomal proteins, e.g. L4, L17, and L20. It is important during the early stages of 50S assembly. It makes multiple contacts with different domains of the 23S rRNA in the assembled 50S subunit and ribosome. The globular domain of the protein is located near the polypeptide exit tunnel on the outside of the subunit, while an extended beta-hairpin is found that lines the wall of the exit tunnel in the center of the 70S ribosome. The chain is Large ribosomal subunit protein uL22 from Ralstonia nicotianae (strain ATCC BAA-1114 / GMI1000) (Ralstonia solanacearum).